The sequence spans 86 residues: Bradykinin-potentiating peptide 25.12 (86 aa).

The signal sequence occupies residues Met1 to Ser22. The segment at Ala67 to Arg86 is disordered.

Belongs to the non-disulfide-bridged peptide (NDBP) superfamily. Long chain multifunctional peptide (group 2) family. As to expression, expressed by the venom gland.

It is found in the secreted. Inhibits angiotensin-converting enzyme (ACE), but does not serve as substrate for the enzyme. Potentiates bradykinin (BK) on the isolated guinea pig ileum as well as the isolated rat uterus for contraction. Also potentiates in vivo the depressor effect of BK on arterial blood pressure in the normotensive anesthetized rat. This is Bradykinin-potentiating peptide 25.12 from Lychas mucronatus (Chinese swimming scorpion).